The chain runs to 133 residues: Small ribosomal subunit protein bS18 (133 aa).

Residues 1–63 (MARPDMGGPK…GDEGGGRRGF (63 aa)) are disordered. Over residues 9 to 39 (PKTGGFGGPRSGGFGGGGGGGFGGGGFGGGR) the composition is skewed to gly residues. The span at 40-59 (GGDRGDRGDRDDRGGDEGGG) shows a compositional bias: basic and acidic residues.

It belongs to the bacterial ribosomal protein bS18 family. In terms of assembly, part of the 30S ribosomal subunit. Forms a tight heterodimer with protein bS6.

Its function is as follows. Binds as a heterodimer with protein bS6 to the central domain of the 16S rRNA, where it helps stabilize the platform of the 30S subunit. The polypeptide is Small ribosomal subunit protein bS18 (Anaeromyxobacter dehalogenans (strain 2CP-1 / ATCC BAA-258)).